A 156-amino-acid polypeptide reads, in one-letter code: MVSRTTTSIPINFRGVGVYKTFANKNLLYCNCNIVSMEKTDLLMMTFAIVNLADYMTTVKGIEMGFHELNEFVSSLNPASFLLLKIAIVATAFALLLYTRRLSFSLGRGIYIGLVAGLAISTAVLGICSVHNLLLLTGFPEVEFLVKVMTGVLALI.

Helical transmembrane passes span 42–59, 79–98, and 105–127; these read LLMM…MTTV, ASFL…LLLY, and SLGR…VLGI.

The protein localises to the cell membrane. This is an uncharacterized protein from Archaeoglobus fulgidus (strain ATCC 49558 / DSM 4304 / JCM 9628 / NBRC 100126 / VC-16).